The primary structure comprises 336 residues: Major histocompatibility complex class I-related protein 1 (336 aa).

The first 18 residues, 1–18 (MMLLLPLIIVLMMKLSDA), serve as a signal peptide directing secretion. The alpha-1 stretch occupies residues 19 to 105 (RTHSLRYFRL…KQLQHHYNHS (87 aa)). The interval 19-197 (RTHSLRYFRL…EYGKDALQRT (179 aa)) is antigen-binding cleft. Residues 19-298 (RTHSLRYFRL…QESETILLVV (280 aa)) lie on the Extracellular side of the membrane. Tyr25 and Arg27 together coordinate 8-(9H-purin-6-yl)-2-oxa-8-azabicyclo[3.3.1]nona-3,6-diene-4,6-dicarbaldehyde. Arg27, Ser42, and Lys61 together coordinate 5-(2-oxoethylideneamino)-6-(D-ribitylamino)uracil. Arg27, Ser42, and Lys61 together coordinate 5-(2-oxopropylideneamino)-6-(D-ribitylamino)uracil. 7-hydroxy-6-methyl-8-(1-D-ribityl)lumazine contacts are provided by Arg27, Ser42, and Lys61. 8-(9H-purin-6-yl)-2-oxa-8-azabicyclo[3.3.1]nona-3,6-diene-4,6-dicarbaldehyde-binding residues include Lys61 and His76. A 2-amino-4-oxopteridine-6-carbaldehyde-binding site is contributed by Lys61. Lys61 is a pyridoxal binding site. N-linked (GlcNAc...) asparagine glycosylation is present at Asn103. The tract at residues 106–197 (GFHTYQRMIG…EYGKDALQRT (92 aa)) is alpha-2. Arg112 contributes to the 8-(9H-purin-6-yl)-2-oxa-8-azabicyclo[3.3.1]nona-3,6-diene-4,6-dicarbaldehyde binding site. 5-(2-oxoethylideneamino)-6-(D-ribitylamino)uracil contacts are provided by Arg112, Tyr170, and Gln171. Arg112, Tyr170, and Gln171 together coordinate 5-(2-oxopropylideneamino)-6-(D-ribitylamino)uracil. Positions 112, 170, and 171 each coordinate 7-hydroxy-6-methyl-8-(1-D-ribityl)lumazine. Disulfide bonds link Cys116-Cys179 and Cys218-Cys274. The segment at 198 to 289 (EPPKVRVNHK…GVHMVLQGFQ (92 aa)) is alpha-3. An Ig-like C1-type domain is found at 200–295 (PKVRVNHKET…QGFQESETIL (96 aa)). The connecting peptide stretch occupies residues 290-298 (ESETILLVV). The chain crosses the membrane as a helical span at residues 299 to 319 (KAVGFIVLAIALAGVGILAWR). The Cytoplasmic segment spans residues 320-336 (KRPRGKNKVICLSTPEH).

It belongs to the MHC class I family. Heterotrimer that consists of MR1, B2M and metabolite antigen. Major classes of metabolite ligands presented by MR1 include riboflavin-related antigens, pyrimidines and ribityl lumazines, nucleobase adducts and folate derivatives. Forms reversible covalent Schiff base complexes with microbial pyrimidine-based metabolite, which serves as a molecular switch triggering complete folding, stable association with B2M and translocation of the ternary complex from endoplasmic reticulum to the plasma membrane. Alternatively, forms non-Schiff base complexes with ribityl lumazines. On antigen-presenting cells, the ternary complex interacts with TCR on MR1-restricted T cells. Interacts with TAPBP and TAPBPL chaperones in the endoplasmic reticulum. TAPBP associated or not with MHC class I peptide loading complex binds ligand-free MR1 or MR1-B2M complex, providing for stable MR1 pools ready for metabolite antigen processing. TAPBPL interacts with MR1 in a ligand-independent way; this interaction may stabilize MR1 pool and facilitate ligand loading and dissociation. Structurally, MR1-B2M heterodimer adopts a topology similar to classical MHC class I molecules, with alpha-1 and alpha-2 domains of MR1 forming the antigen-binding cleft composed of two alpha-helices resting on a floor of 7-stranded anti-parallel beta-pleated sheet. MR1-B2M heterodimer (via alpha-helices) interacts with TCR (via CDR domains). In terms of processing, N-glycosylated.

Its subcellular location is the cell membrane. It is found in the endoplasmic reticulum membrane. The protein resides in the golgi apparatus membrane. It localises to the early endosome membrane. The protein localises to the late endosome membrane. In terms of biological role, antigen-presenting molecule specialized in displaying microbial pyrimidine-based metabolites to alpha-beta T cell receptors (TCR) on innate-type mucosal-associated invariant T (MAIT) cells. In complex with B2M preferentially presents riboflavin-derived metabolites to semi-invariant TCRs on MAIT cells, guiding immune surveillance of the microbial metabolome at mucosal epithelial barriers. Signature pyrimidine-based microbial antigens are generated via non-enzymatic condensation of metabolite intermediates of the riboflavin pathway with by-products arising from other metabolic pathways such as glycolysis. Typical potent antigenic metabolites are 5-(2-oxoethylideneamino)-6-D-ribitylaminouracil (5-OE-RU) and 5-(2-oxopropylideneamino)-6-D-ribitylaminouracil (5-OP-RU), products of condensation of 5-amino-6-D-ribityaminouracil (5-A-RU) with glyoxal or methylglyoxal by-products, respectively. May present microbial antigens to various MAIT cell subsets, providing for unique recognition of diverse microbes, including pathogens that do not synthesize riboflavin. Upon antigen recognition, elicits rapid innate-type MAIT cell activation to eliminate pathogenic microbes by directly killing infected cells. During T cell development, drives thymic selection and post-thymic terminal differentiation of MAIT cells in a process dependent on commensal microflora. Acts as an immune sensor of cancer cell metabolome. May present a tumor-specific or -associated metabolite essential for cancer cell survival to a pan-cancer TCR on a non-MAIT CD8-positive T cell clone, triggering T cell-mediated killing of a wide range of cancer cell types. May present tumor-enriched pyridoxal and pyridoxal 5'-phosphate antigens, enabling preferential recognition of cancer cells. Presents nucleobase carbonyl adducts generated during oxidative stress. Captures M3Ade, a nucleobase adduct composed of one adenine modified by a malondialdehyde trimer, for recognition by MR1-restricted T cell clones expressing a polyclonal TCR repertoire. The protein is Major histocompatibility complex class I-related protein 1 of Bos taurus (Bovine).